The sequence spans 224 residues: PKHD-type hydroxylase Shewana3_0717 (224 aa).

Positions 78–176 (QFYPPLFNRY…RTAAFMWLQS (99 aa)) constitute a Fe2OG dioxygenase domain. Positions 96, 98, and 157 each coordinate Fe cation. Residue arginine 167 participates in 2-oxoglutarate binding.

Fe(2+) serves as cofactor. Requires L-ascorbate as cofactor.

The protein is PKHD-type hydroxylase Shewana3_0717 of Shewanella sp. (strain ANA-3).